Here is a 239-residue protein sequence, read N- to C-terminus: Probable transcriptional regulatory protein lin0388 (239 aa).

The protein belongs to the TACO1 family. YeeN subfamily.

Its subcellular location is the cytoplasm. This is Probable transcriptional regulatory protein lin0388 from Listeria innocua serovar 6a (strain ATCC BAA-680 / CLIP 11262).